The following is a 344-amino-acid chain: Phenylalanine--tRNA ligase alpha subunit (344 aa).

Glu-257 is a binding site for Mg(2+).

This sequence belongs to the class-II aminoacyl-tRNA synthetase family. Phe-tRNA synthetase alpha subunit type 1 subfamily. In terms of assembly, tetramer of two alpha and two beta subunits. Mg(2+) serves as cofactor.

The protein localises to the cytoplasm. The catalysed reaction is tRNA(Phe) + L-phenylalanine + ATP = L-phenylalanyl-tRNA(Phe) + AMP + diphosphate + H(+). The chain is Phenylalanine--tRNA ligase alpha subunit from Chlorobium chlorochromatii (strain CaD3).